Reading from the N-terminus, the 281-residue chain is Tryptophan synthase alpha chain (281 aa).

Catalysis depends on proton acceptor residues Glu-49 and Asp-60.

It belongs to the TrpA family. As to quaternary structure, tetramer of two alpha and two beta chains.

It catalyses the reaction (1S,2R)-1-C-(indol-3-yl)glycerol 3-phosphate + L-serine = D-glyceraldehyde 3-phosphate + L-tryptophan + H2O. It functions in the pathway amino-acid biosynthesis; L-tryptophan biosynthesis; L-tryptophan from chorismate: step 5/5. Its function is as follows. The alpha subunit is responsible for the aldol cleavage of indoleglycerol phosphate to indole and glyceraldehyde 3-phosphate. The sequence is that of Tryptophan synthase alpha chain from Methanocaldococcus jannaschii (strain ATCC 43067 / DSM 2661 / JAL-1 / JCM 10045 / NBRC 100440) (Methanococcus jannaschii).